The sequence spans 934 residues: MITHGCYTRTRHKHKLKKTLIMLSAGLGLFFYVNQNSFANGENYFKLGSDSKLLTHDSYQNRLFYTLKTGETVADLSKSQDINLSTIWSLNKHLYSSESEMMKAAPGQQIILPLKKLPFEYSALPLLGSAPLVAAGGVAGHTNKLTKMSPDVTKSNMTDDKALNYAAQQAASLGSQLQSRSLNGDYAKDTALGIAGNQASSQLQAWLQHYGTAEVNLQSGNNFDGSSLDFLLPFYDSEKMLAFGQVGARYIDSRFTANLGAGQRFFLPANMLGYNVFIDQDFSGDNTRLGIGGEYWRDYFKSSVNGYFRMSGWHESYNKKDYDERPANGFDIRFNGYLPSYPALGAKLIYEQYYGDNVALFNSDKLQSNPGAATVGVNYTPIPLVTMGIDYRHGTGNENDLLYSMQFRYQFDKSWSQQIEPQYVNELRTLSGSRYDLVQRNNNIILEYKKQDILSLNIPHDINGTEHSTQKIQLIVKSKYGLDRIVWDDSALRSQGGQIQHSGSQSAQDYQAILPAYVQGGSNIYKVTARAYDRNGNSSNNVQLTITVLSNGQVVDQVGVTDFTADKTSAKADNADTITYTATVKKNGVAQANVPVSFNIVSGTATLGANSAKTDANGKATVTLKSSTPGQVVVSAKTAEMTSALNASAVIFFDQTKASITEIKADKTTAVANGKDAIKYTVKVMKNGQPVNNQSVTFSTNFGMFNGKSQTQATTGNDGRATITLTSSSAGKATVSATVSDGAEVKATEVTFFDELKIDNKVDIIGNNVRGELPNIWLQYGQFKLKASGGDGTYSWYSENTSIATVDASGKVTLNGKGSVVIKATSGDKQTVSYTIKAPSYMIKVDKQAYYADAMSICKNLLPSTQTVLSDIYDSWGAANKYSHYSSMNSITAWIKQTSSEQRSGVSSTYNLITQNPLPGVNVNTPNVYAVCVE.

The N-terminal stretch at 1–39 (MITHGCYTRTRHKHKLKKTLIMLSAGLGLFFYVNQNSFA) is a signal peptide. The peptidoglycan-binding stretch occupies residues 40 to 153 (NGENYFKLGS…KLTKMSPDVT (114 aa)). Residues 40–153 (NGENYFKLGS…KLTKMSPDVT (114 aa)) are sufficient for homodimerization. Positions 40 to 212 (NGENYFKLGS…LQAWLQHYGT (173 aa)) are required for periplasmic localization. Residues 63–112 (LFYTLKTGETVADLSKSQDINLSTIWSLNKHLYSSESEMMKAAPGQQIIL) form the LysM domain. The segment at 210–411 (YGTAEVNLQS…LYSMQFRYQF (202 aa)) is inverse autotransporter. The signature sequence for beta-barrel assembly machinery (BAM), which recognizes the unfolded beta-barrel in the periplasm stretch occupies residues 402 to 411 (LYSMQFRYQF). A minimum linker residues necessary for formation of a heat-modifiable beta-barrel region spans residues 437–449 (LVQRNNNIILEYK). 2 Big-1 domains span residues 560-653 (VTDF…VIFF) and 660-753 (ITEI…VTFF). Residues 747–934 (ATEVTFFDEL…TPNVYAVCVE (188 aa)) are intimin receptor Tir-binding. The BIG2 domain maps to 787–833 (ASGGDGTYSWYSENTSIATVDASGKVTLNGKGSVVIKATSGDKQTVS). Residues cysteine 858 and cysteine 932 are joined by a disulfide bond.

This sequence belongs to the intimin/invasin family. As to quaternary structure, homodimer. Interacts with Tir.

The protein resides in the cell outer membrane. Its function is as follows. An inverse autotransporter. Adhesin, which mediates attachment to the human intestine epithelial cells. Necessary for the production of attaching and effacing lesions on infected human tissue culture cells. Anchored to the outer membrane by binding to peptidoglycan (PGN) via its periplasmic domain, thus helping in receptor interactions during host invasion. PGN-binding may also aid in resisting mechanical and chemical stress during transit of the bacterium through the gastrointestinal tract of the host. The sequence is that of Intimin from Escherichia coli O157:H7.